The primary structure comprises 842 residues: Protein translocase subunit SecA (842 aa).

Residues Q85, 103–107, and D493 each bind ATP; that span reads GEGKT. Zn(2+)-binding residues include C825, C827, C836, and H837.

This sequence belongs to the SecA family. In terms of assembly, monomer and homodimer. Part of the essential Sec protein translocation apparatus which comprises SecA, SecYEG and auxiliary proteins SecDF. Other proteins may also be involved. Zn(2+) serves as cofactor.

The protein localises to the cell membrane. The protein resides in the cytoplasm. The enzyme catalyses ATP + H2O + cellular proteinSide 1 = ADP + phosphate + cellular proteinSide 2.. Its function is as follows. Part of the Sec protein translocase complex. Interacts with the SecYEG preprotein conducting channel. Has a central role in coupling the hydrolysis of ATP to the transfer of proteins into and across the cell membrane, serving as an ATP-driven molecular motor driving the stepwise translocation of polypeptide chains across the membrane. This chain is Protein translocase subunit SecA, found in Streptococcus uberis (strain ATCC BAA-854 / 0140J).